The sequence spans 144 residues: 3-dehydroquinate dehydratase (144 aa).

Catalysis depends on Tyr-22, which acts as the Proton acceptor. Substrate contacts are provided by Asn-73, His-79, and Asp-86. His-99 functions as the Proton donor in the catalytic mechanism. Residues 100 to 101 and Arg-110 each bind substrate; that span reads LS.

This sequence belongs to the type-II 3-dehydroquinase family. In terms of assembly, homododecamer.

The enzyme catalyses 3-dehydroquinate = 3-dehydroshikimate + H2O. It functions in the pathway metabolic intermediate biosynthesis; chorismate biosynthesis; chorismate from D-erythrose 4-phosphate and phosphoenolpyruvate: step 3/7. Catalyzes a trans-dehydration via an enolate intermediate. This Herpetosiphon aurantiacus (strain ATCC 23779 / DSM 785 / 114-95) protein is 3-dehydroquinate dehydratase.